Reading from the N-terminus, the 448-residue chain is 26S proteasome regulatory subunit 4 homolog (448 aa).

The segment covering 1–16 (MGQGTPGGMGKQGGAP) has biased composition (gly residues). Disordered stretches follow at residues 1–56 (MGQG…AAAR) and 93–112 (LRPT…DLRG). Basic and acidic residues-rich tracts occupy residues 17-33 (GDRK…RKFE) and 93-111 (LRPT…DDLR). 234–241 (GEPGTGKT) lines the ATP pocket.

This sequence belongs to the AAA ATPase family.

The protein resides in the cytoplasm. The protein localises to the nucleus. Its function is as follows. The 26S proteasome is involved in the ATP-dependent degradation of ubiquitinated proteins. The regulatory (or ATPase) complex confers ATP dependency and substrate specificity to the 26S complex. The protein is 26S proteasome regulatory subunit 4 homolog (TBP2) of Oryza sativa subsp. japonica (Rice).